We begin with the raw amino-acid sequence, 166 residues long: UPF0336 protein Mb0656 (166 aa).

Belongs to the UPF0336 family.

The protein is UPF0336 protein Mb0656 of Mycobacterium bovis (strain ATCC BAA-935 / AF2122/97).